The sequence spans 388 residues: Alpha-2A adrenergic receptor (388 aa).

Residues 1-22 (MICGANATNGTNATKEYTLLVA) lie on the Extracellular side of the membrane. N-linked (GlcNAc...) asparagine glycosylation is found at Asn-6, Asn-9, and Asn-12. A helical membrane pass occupies residues 23–48 (LPLSIAVGLLILLIIFGNVLVIIAVF). Topologically, residues 49–59 (TSRALRAPQNL) are cytoplasmic. The helical transmembrane segment at 60–85 (FLVSLASADILVATLVMPFSLANELM) threads the bilayer. Residues 86 to 95 (GMWTFGGVWC) lie on the Extracellular side of the membrane. Cysteines 95 and 169 form a disulfide. Residues 96–118 (EIYLALDVLFCTASITHLCAISL) form a helical membrane-spanning segment. Residues 119 to 138 (DRYWSITQAIEYNLKRTPQR) are Cytoplasmic-facing. The chain crosses the membrane as a helical span at residues 139-162 (IKRIIFIVWIIAAVISCPPLITMK). Topologically, residues 163-173 (KSEGDICDINK) are extracellular. Residues 174–198 (EKWYIVSSCIGSFFLPCIIMVLVYI) traverse the membrane as a helical segment. At 199-311 (RIYQIAKKRT…RQNREKRFTF (113 aa)) the chain is on the cytoplasmic side. The disordered stretch occupies residues 208–291 (TRAPPGDHRK…PGDGDKTEAC (84 aa)). Residues 212–231 (PGDHRKNEVGKKENDPHEKL) show a composition bias toward basic and acidic residues. Positions 266–275 (LKKKSSKGKT) are enriched in basic residues. A helical transmembrane segment spans residues 312 to 337 (VLAVVIGVFVICWFPFFFTYTFTAFC). The Extracellular segment spans residues 338–344 (DCCVPET). A helical transmembrane segment spans residues 345–368 (LFKFFFWFGYCNSSLNPIIYTIFN). Residues 369–388 (NDFRRSFKKILCRRDKRRVV) lie on the Cytoplasmic side of the membrane. Cys-380 carries S-palmitoyl cysteine lipidation.

This sequence belongs to the G-protein coupled receptor 1 family. Adrenergic receptor subfamily. ADRA2A sub-subfamily.

The protein resides in the cell membrane. Functionally, alpha-2 adrenergic receptors mediate the catecholamine-induced inhibition of adenylate cyclase through the action of G proteins. The order of potency for this receptor is dexmedetomidine &gt; oxymetazoline = epinephrine &gt; norepinephrine. The polypeptide is Alpha-2A adrenergic receptor (Danio rerio (Zebrafish)).